Reading from the N-terminus, the 997-residue chain is FHIP family protein CPIJ015043 (997 aa).

Disordered stretches follow at residues 558–579 (DHRSSQCQSPAQQHLHQQQQLQ) and 759–922 (NVVL…GGAA). Low complexity predominate over residues 569–579 (QQHLHQQQQLQ). A compositionally biased stretch (gly residues) spans 763-780 (GGSGPGGPRLSNGGGGTG). Composition is skewed to low complexity over residues 781-792 (SSITSSLSQTTP) and 830-889 (GSNS…MVGS). Positions 911 to 922 (IGSGTVGGGGAA) are enriched in gly residues.

The protein belongs to the FHIP family.

The polypeptide is FHIP family protein CPIJ015043 (Culex quinquefasciatus (Southern house mosquito)).